A 447-amino-acid polypeptide reads, in one-letter code: Methylenetetrahydrofolate--tRNA-(uracil-5-)-methyltransferase TrmFO (447 aa).

13–18 (GAGLAG) lines the FAD pocket.

This sequence belongs to the MnmG family. TrmFO subfamily. It depends on FAD as a cofactor.

The protein localises to the cytoplasm. It catalyses the reaction uridine(54) in tRNA + (6R)-5,10-methylene-5,6,7,8-tetrahydrofolate + NADH + H(+) = 5-methyluridine(54) in tRNA + (6S)-5,6,7,8-tetrahydrofolate + NAD(+). The catalysed reaction is uridine(54) in tRNA + (6R)-5,10-methylene-5,6,7,8-tetrahydrofolate + NADPH + H(+) = 5-methyluridine(54) in tRNA + (6S)-5,6,7,8-tetrahydrofolate + NADP(+). Catalyzes the folate-dependent formation of 5-methyl-uridine at position 54 (M-5-U54) in all tRNAs. The protein is Methylenetetrahydrofolate--tRNA-(uracil-5-)-methyltransferase TrmFO of Streptococcus thermophilus (strain ATCC BAA-491 / LMD-9).